The chain runs to 684 residues: Zinc finger BED domain-containing protein RICESLEEPER 4 (684 aa).

The BED-type zinc finger occupies 54 to 113 (KRKSAIWEHFTLVDVSDGCKRASCIHCNQSLAYSSGSKNSGTSHLTRHIAEWCRVLKDRQ). Zn(2+) is bound by residues Cys77, Cys80, His101, and Cys106. The tract at residues 595-680 (ELELYLEEAL…EALLCAKDWL (86 aa)) is HATC (Hobo-Ac-Tam3) domain.

As to quaternary structure, homodimer.

It is found in the nucleus. Its function is as follows. Transposase-like protein that is essential for plant growth and development. May regulate global gene expression by recruiting other cellular factors. This Oryza sativa subsp. japonica (Rice) protein is Zinc finger BED domain-containing protein RICESLEEPER 4.